Here is a 390-residue protein sequence, read N- to C-terminus: UDP-galactose translocator (390 aa).

Positions 1–24 (MAAVGVGGSTAAAGAGAVSSGALE) are disordered. Helical transmembrane passes span 3-23 (AVGV…SGAL), 37-57 (YISL…IRYA), 65-85 (FFAT…CLLL), 97-117 (LVLF…KLAV), 140-160 (TFQV…VLML), 169-189 (WASL…QAGG), 200-220 (GAGL…GVYF), 238-258 (LGLF…GTAV), 269-289 (PAVW…AVVV), and 315-335 (LFGF…IGAV). The span at 9–22 (STAAAGAGAVSSGA) shows a compositional bias: low complexity. Residues 356-390 (PCIHQQPPGQPPPPQLSSRGDLTTEPFLPKSVLVK) form a disordered region.

The protein belongs to the nucleotide-sugar transporter family. SLC35A subfamily. As to quaternary structure, interacts with SLC35A3; the interaction is reduced in the presence of SLC35A4. Found in a complex with SLC35A3 and SLC35A4.

Its subcellular location is the golgi apparatus membrane. The catalysed reaction is UMP(out) + UDP-alpha-D-galactose(in) = UMP(in) + UDP-alpha-D-galactose(out). The enzyme catalyses UDP-N-acetyl-alpha-D-galactosamine(in) + UMP(out) = UDP-N-acetyl-alpha-D-galactosamine(out) + UMP(in). It catalyses the reaction UMP(out) + UDP-alpha-D-glucose(in) = UMP(in) + UDP-alpha-D-glucose(out). It carries out the reaction UMP(out) + UDP-N-acetyl-alpha-D-glucosamine(in) = UMP(in) + UDP-N-acetyl-alpha-D-glucosamine(out). The catalysed reaction is UDP-alpha-D-galactose(in) + AMP(out) = UDP-alpha-D-galactose(out) + AMP(in). The enzyme catalyses UDP-alpha-D-galactose(in) + CMP(out) = UDP-alpha-D-galactose(out) + CMP(in). It catalyses the reaction UDP-N-acetyl-alpha-D-galactosamine(out) + UDP-alpha-D-galactose(in) = UDP-N-acetyl-alpha-D-galactosamine(in) + UDP-alpha-D-galactose(out). It carries out the reaction UDP-N-acetyl-alpha-D-glucosamine(out) + UDP-alpha-D-galactose(in) = UDP-N-acetyl-alpha-D-glucosamine(in) + UDP-alpha-D-galactose(out). The catalysed reaction is UDP-alpha-D-galactose(in) + UDP-alpha-D-glucose(out) = UDP-alpha-D-galactose(out) + UDP-alpha-D-glucose(in). The enzyme catalyses UMP(out) + CMP(in) = UMP(in) + CMP(out). It catalyses the reaction UMP(out) + AMP(in) = UMP(in) + AMP(out). Functionally, transports uridine diphosphate galactose (UDP-galactose) from the cytosol into the Golgi apparatus. It functions as an antiporter that exchanges UDP-galactose for UMP. It is also able to exchange UDP-galactose for AMP and CMP, and to transport UDP-N-acetylgalactosamine (UDP-GalNAc) and other nucleotide sugars. As a provider of UDP-galactose to galactosyltransferases present in the Golgi apparatus, it is necessary for globotriaosylceramide/globoside (Gb3Cer) synthesis from lactosylceramide. The chain is UDP-galactose translocator from Mus musculus (Mouse).